Here is a 64-residue protein sequence, read N- to C-terminus: Large ribosomal subunit protein bL33 (64 aa).

It belongs to the bacterial ribosomal protein bL33 family.

The polypeptide is Large ribosomal subunit protein bL33 (Nostoc punctiforme (strain ATCC 29133 / PCC 73102)).